Reading from the N-terminus, the 425-residue chain is Serine--tRNA ligase (425 aa).

233-235 (TAE) is an L-serine binding site. Position 264–266 (264–266 (RRE)) interacts with ATP. Residue glutamate 287 coordinates L-serine. ATP is bound at residue 351–354 (EISS). Serine 387 provides a ligand contact to L-serine.

Belongs to the class-II aminoacyl-tRNA synthetase family. Type-1 seryl-tRNA synthetase subfamily. Homodimer. The tRNA molecule binds across the dimer.

Its subcellular location is the cytoplasm. It catalyses the reaction tRNA(Ser) + L-serine + ATP = L-seryl-tRNA(Ser) + AMP + diphosphate + H(+). The enzyme catalyses tRNA(Sec) + L-serine + ATP = L-seryl-tRNA(Sec) + AMP + diphosphate + H(+). The protein operates within aminoacyl-tRNA biosynthesis; selenocysteinyl-tRNA(Sec) biosynthesis; L-seryl-tRNA(Sec) from L-serine and tRNA(Sec): step 1/1. Its function is as follows. Catalyzes the attachment of serine to tRNA(Ser). Is also able to aminoacylate tRNA(Sec) with serine, to form the misacylated tRNA L-seryl-tRNA(Sec), which will be further converted into selenocysteinyl-tRNA(Sec). This is Serine--tRNA ligase from Thermotoga petrophila (strain ATCC BAA-488 / DSM 13995 / JCM 10881 / RKU-1).